The primary structure comprises 360 residues: Pyrimidine monooxygenase RutA (360 aa).

Residues 49–50, N115, E124, 140–141, and S190 contribute to the FMN site; these read IK and RY.

This sequence belongs to the NtaA/SnaA/DszA monooxygenase family. RutA subfamily.

It catalyses the reaction uracil + FMNH2 + NADH + O2 = (Z)-3-ureidoacrylate + FMN + NAD(+) + H2O + H(+). The catalysed reaction is thymine + FMNH2 + NADH + O2 = (Z)-2-methylureidoacrylate + FMN + NAD(+) + H2O + H(+). Its function is as follows. Catalyzes the pyrimidine ring opening between N-3 and C-4 by an unusual flavin hydroperoxide-catalyzed mechanism, adding oxygen atoms in the process to yield ureidoacrylate peracid, that immediately reacts with FMN forming ureidoacrylate and FMN-N(5)-oxide. The FMN-N(5)-oxide reacts spontaneously with NADH to produce FMN. Requires the flavin reductase RutF to regenerate FMN in vivo. In Bradyrhizobium sp. (strain BTAi1 / ATCC BAA-1182), this protein is Pyrimidine monooxygenase RutA.